Reading from the N-terminus, the 101-residue chain is Large ribosomal subunit protein uL23 (101 aa).

It belongs to the universal ribosomal protein uL23 family. As to quaternary structure, part of the 50S ribosomal subunit. Contacts protein L29, and trigger factor when it is bound to the ribosome.

Its function is as follows. One of the early assembly proteins it binds 23S rRNA. One of the proteins that surrounds the polypeptide exit tunnel on the outside of the ribosome. Forms the main docking site for trigger factor binding to the ribosome. The chain is Large ribosomal subunit protein uL23 from Wigglesworthia glossinidia brevipalpis.